We begin with the raw amino-acid sequence, 142 residues long: uncharacterized protein (142 aa).

A disordered region spans residues 70 to 94; that stretch reads PKSVSNSKKKKEKAEKGLLRPTTKP. A compositionally biased stretch (basic and acidic residues) spans 81–94; it reads EKAEKGLLRPTTKP.

This is an uncharacterized protein from Bacillus subtilis (strain 168).